The chain runs to 116 residues: Protein cop (116 aa).

Putative control of replication message. The polypeptide is Protein cop (cop) (Staphylococcus aureus).